Reading from the N-terminus, the 159-residue chain is Endoribonuclease YbeY (159 aa).

Zn(2+) is bound by residues histidine 123, histidine 127, and histidine 133.

The protein belongs to the endoribonuclease YbeY family. Zn(2+) is required as a cofactor.

The protein localises to the cytoplasm. Functionally, single strand-specific metallo-endoribonuclease involved in late-stage 70S ribosome quality control and in maturation of the 3' terminus of the 16S rRNA. This is Endoribonuclease YbeY from Bacillus pumilus (strain SAFR-032).